Consider the following 365-residue polypeptide: MFEINPVNNRIQDLTERSDVLRGYLDYDAKKERLEEVNAELEQPDVWNEPERAQALGKERSSLEAVVDTLDQMKQGLEDVSGLLELAVEADDEETFNEAVAELDALEEKLAQLEFRRMFSGEYDSADCYLDIQAGSGGTEAQDWASMLERMYLRWAESRGFKTEIIEESEGEVAGIKSVTIKISGDYAYGWLRTETGVHRLVRKSPFDSGGRRHTSFSSAFVYPEVDDDIDIEINPADLRIDVYRTSGAGGQHVNRTESAVRITHIPTGIVTQCQNDRSQHKNKDQAMKQMKAKLYELEMQKKNAEKQAMEDNKSDIGWGSQIRSYVLDDSRIKDLRTGVETRNTQAVLDGSLDQFIEASLKAGL.

The residue at position 252 (Gln-252) is an N5-methylglutamine.

It belongs to the prokaryotic/mitochondrial release factor family. Post-translationally, methylated by PrmC. Methylation increases the termination efficiency of RF2.

It localises to the cytoplasm. Peptide chain release factor 2 directs the termination of translation in response to the peptide chain termination codons UGA and UAA. This Escherichia coli (strain K12 / MC4100 / BW2952) protein is Peptide chain release factor 2.